Consider the following 113-residue polypeptide: Ribonuclease P protein component (113 aa).

It belongs to the RnpA family. As to quaternary structure, consists of a catalytic RNA component (M1 or rnpB) and a protein subunit.

The catalysed reaction is Endonucleolytic cleavage of RNA, removing 5'-extranucleotides from tRNA precursor.. RNaseP catalyzes the removal of the 5'-leader sequence from pre-tRNA to produce the mature 5'-terminus. It can also cleave other RNA substrates such as 4.5S RNA. The protein component plays an auxiliary but essential role in vivo by binding to the 5'-leader sequence and broadening the substrate specificity of the ribozyme. The chain is Ribonuclease P protein component from Ligilactobacillus salivarius (strain UCC118) (Lactobacillus salivarius).